The sequence spans 349 residues: Green-sensitive opsin-2 (349 aa).

Topologically, residues 1-36 (MNGTEGNNFYVPLSNRTGLVRSPFEYPQYYLAEPWQ) are extracellular. N2 and N15 each carry an N-linked (GlcNAc...) asparagine glycan. The chain crosses the membrane as a helical span at residues 37–61 (FKLLAVYMFFLICLGLPINGLTLIC). At 62 to 73 (TAQHKKLRQPLN) the chain is on the cytoplasmic side. Residues 74 to 99 (FILVNLAVAGAIMVCFGFTVTFYTAI) form a helical membrane-spanning segment. Residues 100 to 113 (NGYFALGPTGCAVE) lie on the Extracellular side of the membrane. C110 and C187 are joined by a disulfide. Residues 114–133 (GFMATLGGEVALWSLVVLAI) form a helical membrane-spanning segment. Residues 134–152 (ERYIVVCKPMGSFKFSSTH) are Cytoplasmic-facing. A helical membrane pass occupies residues 153 to 176 (ASAGIAFTWVMAMACAAPPLVGWS). Over 177 to 202 (RYIPEGIQCSCGPDYYTLNPEYNNES) the chain is Extracellular. The chain crosses the membrane as a helical span at residues 203 to 230 (YVLYMFICHFILPVTIIFFTYGRLVCTV). Over 231 to 252 (KAAAAQQQDSASTQKAEREVTK) the chain is Cytoplasmic. Residues 253–276 (MVILMVLGFLVAWTPYATVAAWIF) traverse the membrane as a helical segment. The Extracellular portion of the chain corresponds to 277–284 (FNKGAAFS). The chain crosses the membrane as a helical span at residues 285-309 (AQFMAIPAFFSKTSALYNPVIYVLL). K296 carries the N6-(retinylidene)lysine modification. Topologically, residues 310–349 (NKQFRSCMLTTLFCGKNPLGDEESSTVSTSKTEVSSVSPA) are cytoplasmic. Residues 329–349 (GDEESSTVSTSKTEVSSVSPA) are disordered. Positions 334–349 (STVSTSKTEVSSVSPA) are enriched in low complexity.

The protein belongs to the G-protein coupled receptor 1 family. Opsin subfamily. Phosphorylated on some or all of the serine and threonine residues present in the C-terminal region. In terms of tissue distribution, the color pigments are found in the cone photoreceptor cells.

It localises to the membrane. Visual pigments are the light-absorbing molecules that mediate vision. They consist of an apoprotein, opsin, covalently linked to cis-retinal. This chain is Green-sensitive opsin-2, found in Carassius auratus (Goldfish).